Consider the following 312-residue polypeptide: Olfactory receptor 5J2 (312 aa).

Residues 1 to 25 are Extracellular-facing; that stretch reads MADDNFTVVTEFILLGLTDHAELKA. A glycan (N-linked (GlcNAc...) asparagine) is linked at Asn5. Residues 26–46 traverse the membrane as a helical segment; sequence VLFVVFLVIYAITLLRNLGMI. At 47–54 the chain is on the cytoplasmic side; it reads LLIQITSK. Residues 55 to 75 form a helical membrane-spanning segment; that stretch reads LHTPMYFLLSCLSFVDACYSS. Residues 76–99 lie on the Extracellular side of the membrane; that stretch reads AIAPKMLVNLLVVKATISFSACMV. Cysteines 97 and 189 form a disulfide. A helical membrane pass occupies residues 100 to 120; sequence QHLCFGVFITTEGFLLSVMAY. At 121 to 139 the chain is on the cytoplasmic side; sequence DRYVAIVSPLLYTVAMSDR. The helical transmembrane segment at 140 to 160 threads the bilayer; sequence KCVELVTGSWIGGIVNTLIHT. At 161–196 the chain is on the extracellular side; the sequence is ISLRRLSFCRLNAVSHFFCDIPSLLKLSCSDTSMNE. The helical transmembrane segment at 197–217 threads the bilayer; the sequence is LLLLTFSGVIAMATFLTVIIS. At 218 to 237 the chain is on the cytoplasmic side; that stretch reads YIFIAFASLRIHSASGRQQA. The chain crosses the membrane as a helical span at residues 238–258; it reads FSTCASHLTAVTIFYGTLIFS. The Extracellular segment spans residues 259–271; it reads YIQPSSQYFVEQE. The helical transmembrane segment at 272–292 threads the bilayer; that stretch reads KVVSMFYTLGIPMLNLLIHSL. The Cytoplasmic portion of the chain corresponds to 293 to 312; the sequence is RNKDVKEAVKRAIEMKHFLC.

It belongs to the G-protein coupled receptor 1 family.

It localises to the cell membrane. Odorant receptor. In Homo sapiens (Human), this protein is Olfactory receptor 5J2 (OR5J2).